A 211-amino-acid polypeptide reads, in one-letter code: Uridine kinase (211 aa).

12–19 provides a ligand contact to ATP; sequence GGSGSGKT.

The protein belongs to the uridine kinase family.

The protein resides in the cytoplasm. It carries out the reaction uridine + ATP = UMP + ADP + H(+). It catalyses the reaction cytidine + ATP = CMP + ADP + H(+). It functions in the pathway pyrimidine metabolism; CTP biosynthesis via salvage pathway; CTP from cytidine: step 1/3. The protein operates within pyrimidine metabolism; UMP biosynthesis via salvage pathway; UMP from uridine: step 1/1. This chain is Uridine kinase, found in Geobacillus kaustophilus (strain HTA426).